A 918-amino-acid polypeptide reads, in one-letter code: UPF0182 protein CPF_0011 (918 aa).

The next 7 helical transmembrane spans lie at 8-28 (TVLISILLLVVVFFVSTNFII), 46-66 (LIAICKLFVPIFILYFCVIAI), 91-111 (FLLSNLVISILGAGATATTQW), 151-171 (AISLIIILVLITVIIYLALGF), 200-220 (LAVLASVLSLLIGCSYLLKSY), 243-263 (IFYKVIAVACVISSIVVFISI), and 271-291 (IIISIASIAVLIVLEPVVAIF). The segment covering 857 to 869 (EENKNSNKDETPK) has biased composition (basic and acidic residues). The segment at 857–876 (EENKNSNKDETPKNEITSDN) is disordered.

This sequence belongs to the UPF0182 family.

The protein resides in the cell membrane. This chain is UPF0182 protein CPF_0011, found in Clostridium perfringens (strain ATCC 13124 / DSM 756 / JCM 1290 / NCIMB 6125 / NCTC 8237 / Type A).